The chain runs to 433 residues: ATP-dependent RNA helicase SUB2 (433 aa).

Acidic residues predominate over residues 1-17 (MSAENQEELLDYSDSEE). The interval 1–39 (MSAENQEELLDYSDSEEIAVPTTTQAGEGESANDKEADK) is disordered. The short motif at 49–77 (TGFRDFLLKPELLRAIGDCGFEHPSEVQQ) is the Q motif element. Residues 80–255 (IPQSILGTDV…KKFMQNPLEI (176 aa)) form the Helicase ATP-binding domain. An ATP-binding site is contributed by 93–100 (AKSGLGKT). A DEAD box motif is present at residues 202-205 (DECD). Residues 267-428 (GLQQYYIKLE…EFPEEGVDPS (162 aa)) form the Helicase C-terminal domain.

Belongs to the DEAD box helicase family. DECD subfamily.

The protein resides in the nucleus. It catalyses the reaction ATP + H2O = ADP + phosphate + H(+). In terms of biological role, ATP-binding RNA helicase involved in transcription elongation and required for the export of mRNA out of the nucleus. SUB2 also plays a role in pre-mRNA splicing and spliceosome assembly. May be involved in rDNA and telomeric silencing, and maintenance of genome integrity. This is ATP-dependent RNA helicase SUB2 (SUB2) from Lodderomyces elongisporus (strain ATCC 11503 / CBS 2605 / JCM 1781 / NBRC 1676 / NRRL YB-4239) (Yeast).